A 240-amino-acid chain; its full sequence is Large ribosomal subunit protein uL2 (240 aa).

Positions 1-11 (MGKRLISQNRG) are enriched in polar residues. Disordered stretches follow at residues 1 to 25 (MGKR…HKRK) and 207 to 240 (GGRH…TGKR). Composition is skewed to basic residues over residues 13–25 (GTPK…HKRK) and 224–240 (SPGR…TGKR).

The protein belongs to the universal ribosomal protein uL2 family. In terms of assembly, part of the 50S ribosomal subunit. Forms a bridge to the 30S subunit in the 70S ribosome.

One of the primary rRNA binding proteins. Required for association of the 30S and 50S subunits to form the 70S ribosome, for tRNA binding and peptide bond formation. It has been suggested to have peptidyltransferase activity; this is somewhat controversial. Makes several contacts with the 16S rRNA in the 70S ribosome. The sequence is that of Large ribosomal subunit protein uL2 from Methanococcus maripaludis (strain DSM 14266 / JCM 13030 / NBRC 101832 / S2 / LL).